A 283-amino-acid polypeptide reads, in one-letter code: ATP phosphoribosyltransferase (283 aa).

This sequence belongs to the ATP phosphoribosyltransferase family. Long subfamily. Mg(2+) serves as cofactor.

It localises to the cytoplasm. It catalyses the reaction 1-(5-phospho-beta-D-ribosyl)-ATP + diphosphate = 5-phospho-alpha-D-ribose 1-diphosphate + ATP. It participates in amino-acid biosynthesis; L-histidine biosynthesis; L-histidine from 5-phospho-alpha-D-ribose 1-diphosphate: step 1/9. With respect to regulation, feedback inhibited by histidine. In terms of biological role, catalyzes the condensation of ATP and 5-phosphoribose 1-diphosphate to form N'-(5'-phosphoribosyl)-ATP (PR-ATP). Has a crucial role in the pathway because the rate of histidine biosynthesis seems to be controlled primarily by regulation of HisG enzymatic activity. The sequence is that of ATP phosphoribosyltransferase from Rhodococcus jostii (strain RHA1).